Consider the following 822-residue polypeptide: Ribonucleoside-diphosphate reductase large subunit (822 aa).

Substrate-binding positions include T249, S264–C265, G295, N470–E474, and P651–S655. Residues C265 and C487 are joined by a disulfide bond. Catalysis depends on N470, which acts as the Proton acceptor. The Cysteine radical intermediate role is filled by C472. E474 serves as the catalytic Proton acceptor.

It belongs to the ribonucleoside diphosphate reductase large chain family. Heterotetramer composed of a homodimer of the large subunit (R1) and a homodimer of the small subunit (R2). Larger multisubunit protein complex are also active, composed of (R1)n(R2)n.

It catalyses the reaction a 2'-deoxyribonucleoside 5'-diphosphate + [thioredoxin]-disulfide + H2O = a ribonucleoside 5'-diphosphate + [thioredoxin]-dithiol. Functionally, ribonucleoside-diphosphate reductase holoenzyme provides the precursors necessary for viral DNA synthesis. Allows virus growth in non-dividing cells, as well as reactivation from latency in infected hosts. Catalyzes the biosynthesis of deoxyribonucleotides from the corresponding ribonucleotides. This is Ribonucleoside-diphosphate reductase large subunit from Gallus gallus (Chicken).